The sequence spans 387 residues: Eukaryotic translation initiation factor 3 subunit M (387 aa).

Residues 181-340 (LSSKVMIELL…QKVHISSTMH (160 aa)) form the PCI domain.

The protein belongs to the eIF-3 subunit M family. As to quaternary structure, component of the eukaryotic translation initiation factor 3 (eIF-3) complex. The eIF-3 complex interacts with pix.

It is found in the cytoplasm. It localises to the golgi apparatus. Its function is as follows. Component of the eukaryotic translation initiation factor 3 (eIF-3) complex, which is involved in protein synthesis of a specialized repertoire of mRNAs and, together with other initiation factors, stimulates binding of mRNA and methionyl-tRNAi to the 40S ribosome. The eIF-3 complex specifically targets and initiates translation of a subset of mRNAs involved in cell proliferation. The chain is Eukaryotic translation initiation factor 3 subunit M from Drosophila sechellia (Fruit fly).